The following is a 144-amino-acid chain: Protein cornichon homolog 1 (144 aa).

At 1 to 10 (MAFTFAAFCY) the chain is on the cytoplasmic side. Residues 11 to 31 (MLALLLTATLIFFAIWHIIAF) traverse the membrane as a helical segment. At 32 to 56 (DELKTDYKNPIDQCNTLNPLVLPEY) the chain is on the lumenal side. A helical membrane pass occupies residues 57–77 (LIHAFFCVMFLCAAEWLTLGL). Residues 78-122 (NMPLLAYHIWRYMSRPVMSGPGLYDPTTIMNADILAYCQKEGWCK) are Cytoplasmic-facing. A helical transmembrane segment spans residues 123 to 143 (LAFYLLAFFYYLYGMIYVLVS). Residue S144 is a topological domain, lumenal.

This sequence belongs to the cornichon family. In terms of assembly, interacts with AREG immature precursor and with immature TGFA, i.e. with a prosegment and lacking full N-glycosylation, but not with the fully N-glycosylated form. In the Golgi apparatus, may form a complex with GORASP55 and transmembrane TGFA.

The protein resides in the endoplasmic reticulum membrane. It is found in the golgi apparatus membrane. Involved in the selective transport and maturation of TGF-alpha family proteins. This Pongo abelii (Sumatran orangutan) protein is Protein cornichon homolog 1 (CNIH1).